The following is a 446-amino-acid chain: Dihydroorotate dehydrogenase (quinone), mitochondrial (446 aa).

A mitochondrion-targeting transit peptide spans 1-13 (MHSRPLPTLGRHA). A helical transmembrane segment spans residues 40-57 (AILYTAGILGGAFAGYYL). FMN-binding positions include 125–129 (AGLDK) and serine 149. Residue lysine 129 participates in substrate binding. 174–178 (NRYGF) serves as a coordination point for substrate. FMN-binding residues include asparagine 222 and asparagine 252. Substrate is bound by residues asparagine 252 and 252–257 (NVSSPN). Serine 255 acts as the Nucleophile in catalysis. The FMN site is built by lysine 303 and serine 331. 332–333 (NT) is a substrate binding site. FMN is bound by residues glycine 357, glycine 387, and 408-409 (YT).

It belongs to the dihydroorotate dehydrogenase family. Type 2 subfamily. Requires FMN as cofactor.

The protein localises to the mitochondrion inner membrane. The catalysed reaction is (S)-dihydroorotate + a quinone = orotate + a quinol. The protein operates within pyrimidine metabolism; UMP biosynthesis via de novo pathway; orotate from (S)-dihydroorotate (quinone route): step 1/1. The activity is dependent of the presence of oxygen. Its function is as follows. Catalyzes the conversion of dihydroorotate to orotate with quinone as electron acceptor. The chain is Dihydroorotate dehydrogenase (quinone), mitochondrial (URA9) from Lachancea kluyveri (strain ATCC 58438 / CBS 3082 / BCRC 21498 / NBRC 1685 / JCM 7257 / NCYC 543 / NRRL Y-12651) (Yeast).